A 28-amino-acid chain; its full sequence is Ranatuerin-2BYb (28 aa).

A disulfide bridge links cysteine 23 with cysteine 28.

In terms of tissue distribution, expressed by the skin glands.

The protein resides in the secreted. Functionally, antibacterial activity against Gram-negative bacterium E.coli. Very weak hemolysis activity. The sequence is that of Ranatuerin-2BYb from Rana boylii (Foothill yellow-legged frog).